A 461-amino-acid chain; its full sequence is Proton extrusion protein PxcA (461 aa).

Helical transmembrane passes span Phe-244–Val-264, Leu-339–Gly-359, Ile-386–Val-406, and Phe-421–Ile-441.

This sequence belongs to the CemA family.

Its subcellular location is the cell inner membrane. In terms of biological role, required for H(+) efflux immediately after light irradiation to form a rapid H(+) concentration gradient across the thylakoid membranes. Together with PxcL, contributes to transient H(+) uptake following dark to light transition. The protein is Proton extrusion protein PxcA of Thermosynechococcus vestitus (strain NIES-2133 / IAM M-273 / BP-1).